The chain runs to 384 residues: uncharacterized protein (384 aa).

Residues 137–303 (EHDAPNRLWQ…VPGSRYQPSA (167 aa)) enclose the Integrase catalytic domain.

This is an uncharacterized protein from Escherichia coli (strain K12).